The chain runs to 214 residues: tRNA (guanine-N(7)-)-methyltransferase (214 aa).

4 residues coordinate S-adenosyl-L-methionine: Glu44, Glu69, Asp96, and Asp118. Residue Asp118 is part of the active site. Residues Lys122, Asp154, and Thr191 to Glu194 each bind substrate.

It belongs to the class I-like SAM-binding methyltransferase superfamily. TrmB family.

The catalysed reaction is guanosine(46) in tRNA + S-adenosyl-L-methionine = N(7)-methylguanosine(46) in tRNA + S-adenosyl-L-homocysteine. It participates in tRNA modification; N(7)-methylguanine-tRNA biosynthesis. Functionally, catalyzes the formation of N(7)-methylguanine at position 46 (m7G46) in tRNA. This is tRNA (guanine-N(7)-)-methyltransferase from Listeria innocua serovar 6a (strain ATCC BAA-680 / CLIP 11262).